We begin with the raw amino-acid sequence, 1364 residues long: Pleckstrin homology domain-containing family H member 1 (1364 aa).

Residues 28–169 (FRLQASKIRE…VGSLQDALEA (142 aa)) are a coiled coil. 5 disordered regions span residues 184-266 (GAAE…SPPH), 296-321 (GTKTSAREGGPGSSLTLPKVRAPGTP), 356-395 (LHPSGLPELESRARSREEPEKMEMEEPPPAGKNEERESPK), 487-529 (PFMD…IKRG), and 546-568 (DACSLDSDYSEPEHKLQRTSSYS). Over residues 237-246 (EDSSSSTVHS) the composition is skewed to polar residues. Over residues 364–379 (LESRARSREEPEKMEM) the composition is skewed to basic and acidic residues. The span at 509-520 (VPSSESRKTSGL) shows a compositional bias: polar residues. PH domains lie at 578-672 (SLEK…SLLK) and 687-796 (KPTV…VAAG). Residue Ser-745 is modified to Phosphoserine. One can recognise a MyTH4 domain in the interval 832–986 (YSKDGLYASL…PSRMEVVSIL (155 aa)). The region spanning 997 to 1333 (FSIPVHFTNG…NHCTTTVNPP (337 aa)) is the FERM domain.

The polypeptide is Pleckstrin homology domain-containing family H member 1 (PLEKHH1) (Homo sapiens (Human)).